The chain runs to 544 residues: Chaperonin GroEL 2 (544 aa).

ATP-binding positions include 29 to 32 (TLGP), 86 to 90 (DGTTT), Gly413, 479 to 481 (NAA), and Asp495.

It belongs to the chaperonin (HSP60) family. As to quaternary structure, forms a cylinder of 14 subunits composed of two heptameric rings stacked back-to-back. Interacts with the co-chaperonin GroES.

The protein localises to the cytoplasm. The enzyme catalyses ATP + H2O + a folded polypeptide = ADP + phosphate + an unfolded polypeptide.. Together with its co-chaperonin GroES, plays an essential role in assisting protein folding. The GroEL-GroES system forms a nano-cage that allows encapsulation of the non-native substrate proteins and provides a physical environment optimized to promote and accelerate protein folding. In Synechococcus sp. (strain WH7803), this protein is Chaperonin GroEL 2.